We begin with the raw amino-acid sequence, 443 residues long: Xaa-Pro dipeptidase (443 aa).

The Mn(2+) site is built by Asp-246, Asp-257, His-339, Glu-384, and Glu-423.

Belongs to the peptidase M24B family. Bacterial-type prolidase subfamily. It depends on Mn(2+) as a cofactor.

The enzyme catalyses Xaa-L-Pro dipeptide + H2O = an L-alpha-amino acid + L-proline. Its function is as follows. Splits dipeptides with a prolyl residue in the C-terminal position. This chain is Xaa-Pro dipeptidase, found in Shigella flexneri.